A 305-amino-acid chain; its full sequence is tRNA pseudouridine synthase B (305 aa).

Aspartate 48 serves as the catalytic Nucleophile.

This sequence belongs to the pseudouridine synthase TruB family. Type 1 subfamily.

The catalysed reaction is uridine(55) in tRNA = pseudouridine(55) in tRNA. Functionally, responsible for synthesis of pseudouridine from uracil-55 in the psi GC loop of transfer RNAs. The protein is tRNA pseudouridine synthase B of Actinobacillus pleuropneumoniae serotype 5b (strain L20).